We begin with the raw amino-acid sequence, 657 residues long: Methionine--tRNA ligase (657 aa).

The 'HIGH' region signature appears at 13–23; sequence YYPSGNLHIGH. The 'KMSKS' region motif lies at 308 to 312; sequence KMSKS. Lys-311 contributes to the ATP binding site. The tRNA-binding domain occupies 557–657; the sequence is DFDKVEIKAA…SAIPNGAVIK (101 aa).

The protein belongs to the class-I aminoacyl-tRNA synthetase family. MetG type 2B subfamily. As to quaternary structure, homodimer.

It localises to the cytoplasm. It carries out the reaction tRNA(Met) + L-methionine + ATP = L-methionyl-tRNA(Met) + AMP + diphosphate. Functionally, is required not only for elongation of protein synthesis but also for the initiation of all mRNA translation through initiator tRNA(fMet) aminoacylation. This is Methionine--tRNA ligase from Staphylococcus aureus (strain MRSA252).